The chain runs to 416 residues: Type II methyltransferase M.PspPI (416 aa).

The region spanning 77–410 (YSLVELFAGA…KAIIRMLNAA (334 aa)) is the SAM-dependent MTase C5-type domain. Residue Cys-149 is part of the active site.

The protein belongs to the class I-like SAM-binding methyltransferase superfamily. C5-methyltransferase family.

It catalyses the reaction a 2'-deoxycytidine in DNA + S-adenosyl-L-methionine = a 5-methyl-2'-deoxycytidine in DNA + S-adenosyl-L-homocysteine + H(+). Its function is as follows. A methylase, recognizes the double-stranded sequence 5'-GGNCC-3', methylates C-4 on both strands, and protects the DNA from cleavage by the PspPI endonuclease. This Psychrobacter sp. (strain TA137) protein is Type II methyltransferase M.PspPI.